The chain runs to 236 residues: NADH-quinone oxidoreductase subunit C (236 aa).

Residues 1–20 (MSPPNQDAQEGRPDSPTAEV) form a disordered region.

Belongs to the complex I 30 kDa subunit family. In terms of assembly, NDH-1 is composed of 14 different subunits. Subunits NuoB, C, D, E, F, and G constitute the peripheral sector of the complex.

The protein localises to the cell membrane. The enzyme catalyses a quinone + NADH + 5 H(+)(in) = a quinol + NAD(+) + 4 H(+)(out). NDH-1 shuttles electrons from NADH, via FMN and iron-sulfur (Fe-S) centers, to quinones in the respiratory chain. The immediate electron acceptor for the enzyme in this species is believed to be a menaquinone. Couples the redox reaction to proton translocation (for every two electrons transferred, four hydrogen ions are translocated across the cytoplasmic membrane), and thus conserves the redox energy in a proton gradient. The chain is NADH-quinone oxidoreductase subunit C from Mycobacterium tuberculosis (strain ATCC 25177 / H37Ra).